We begin with the raw amino-acid sequence, 386 residues long: MGSIGAASTEFCFDMFKELKVHHVNENIIYSPLSIISILSMVFLGARENTKTQMEKVIHFDKITGFGESLESQCGTSVSVHASLKDILSEITKPSDNYSLSLASKLYAEETYPVLPEYLQCIKELYKGSLETVSFQTAADQARELINSWVETQTNGVIKNFLQPGSVDPQTEMVLVDAIYFKGTWEKAFKDEDTQEVPFRITEQESKPVQMMYQAGSFKVATVAAEKMKILELPYASGELSMFVLLPDDISGLEQLETTISIEKLSEWTSSNMMEDRKMKVYLPHMKIEEKYNLTSVLVALGMTDLFSPSANLSGISTAQTLKMSEAIHGAYVEIYEAGSEMATSTGVLVEAASVSEEFRVDHPFLFLIKHNPSNSILFFGRCIFP.

Glycine 2 carries the post-translational modification N-acetylglycine. Position 69 is a phosphoserine (serine 69). A disulfide bridge connects residues cysteine 74 and cysteine 121. N-linked (GlcNAc...) asparagine glycosylation occurs at asparagine 293. Serine 345 carries the phosphoserine modification.

It belongs to the serpin family. Ov-serpin subfamily. In terms of processing, the N-terminus is blocked.

The protein localises to the secreted. In terms of biological role, storage protein of egg white. Lacks protease inhibitory activity. This chain is Ovalbumin (SERPINB14), found in Dromaius novaehollandiae (Emu).